We begin with the raw amino-acid sequence, 1407 residues long: JmjC domain-containing histone demethylation protein 1 (1407 aa).

Disordered stretches follow at residues 1–86 (MISA…SSTI) and 98–151 (PTFT…NAFS). Composition is skewed to basic and acidic residues over residues 55 to 67 (DHVR…KRPS) and 125 to 140 (PVER…RDES). A compositionally biased stretch (polar residues) spans 141–150 (SYTQHRSNAF). A PHD-type zinc finger spans residues 323-382 (QASCATCNLVRIPVDNEDQDVTWISCDGCKRWFHIVCAGFKNDRETRTVDKFICKTCRPI). Residues 577-735 (VSQSKLGRLI…MQIKIAKIEK (159 aa)) form the JmjC domain. Position 628 (Thr-628) interacts with substrate. 2 residues coordinate Fe cation: His-631 and Asp-633. Residue Lys-648 participates in substrate binding. Residue His-703 coordinates Fe cation. 4 disordered regions span residues 893 to 987 (KLSL…LGPK), 1004 to 1027 (KEEN…HHTP), 1122 to 1183 (IKAQ…QDSV), and 1252 to 1389 (DEMD…SLRL). Basic and acidic residues-rich tracts occupy residues 896 to 914 (LAEK…RNAD) and 928 to 938 (LSERPAVDIQK). A compositionally biased stretch (polar residues) spans 1008 to 1027 (NGASGSQMTVSTSSLGHHTP). The span at 1254–1264 (MDIHDQVDAGG) shows a compositional bias: basic and acidic residues. The span at 1273 to 1284 (PSSGSRQSSRQP) shows a compositional bias: low complexity. The segment covering 1285–1296 (RQVERYMPEVHF) has biased composition (basic and acidic residues). Low complexity predominate over residues 1297–1349 (AKTAKSTTTTPQTTRRSSFGSSGRKTTPGLSSGSKKSGSRPSSSHGKKSLSPS).

It belongs to the JHDM1 histone demethylase family. Fe(2+) is required as a cofactor.

The protein localises to the nucleus. It carries out the reaction N(6),N(6)-dimethyl-L-lysyl(36)-[histone H3] + 2 2-oxoglutarate + 2 O2 = L-lysyl(36)-[histone H3] + 2 formaldehyde + 2 succinate + 2 CO2. Functionally, histone demethylase that specifically demethylates 'Lys-36' of histone H3, thereby playing a central role in histone code. This is JmjC domain-containing histone demethylation protein 1 (jhd1) from Emericella nidulans (strain FGSC A4 / ATCC 38163 / CBS 112.46 / NRRL 194 / M139) (Aspergillus nidulans).